The following is a 194-amino-acid chain: 7-methyl-GTP pyrophosphatase (194 aa).

Aspartate 69 acts as the Proton acceptor in catalysis.

It belongs to the Maf family. YceF subfamily. A divalent metal cation serves as cofactor.

It localises to the cytoplasm. It catalyses the reaction N(7)-methyl-GTP + H2O = N(7)-methyl-GMP + diphosphate + H(+). Functionally, nucleoside triphosphate pyrophosphatase that hydrolyzes 7-methyl-GTP (m(7)GTP). May have a dual role in cell division arrest and in preventing the incorporation of modified nucleotides into cellular nucleic acids. This Shigella flexneri protein is 7-methyl-GTP pyrophosphatase (yceF).